The sequence spans 128 residues: Con-Ins F2 (128 aa).

Positions 1–24 (MTTSSYFLLVALGLLLYVCRSSFG) are cleaved as a signal peptide. Cystine bridges form between C29–C104, C41–C107, C53–C120, and C106–C111. A propeptide spans 59 to 89 (LQGGTGKKRGRASLLRKRRAFLSMLKARAKR) (c peptide). The residue at position 115 (E115) is a 4-carboxyglutamate; partial. Residue S127 is modified to Serine amide.

This sequence belongs to the insulin family. In terms of assembly, heterodimer of A and B chains; disulfide-linked. As to expression, expressed by the venom gland.

It is found in the secreted. This venom insulin facilitates prey capture by rapidly inducing hypoglycemic shock. Intraperitoneal injection of this peptide into zebrafish lowers blood glucose with the same potency than human insulin. In vivo, when applied to water, this peptide reduces overall locomotor activity of zebrafish larvae, observed as a significant decrease in the percentage of time spent swimming and movement frequency. In Conus floridulus (Cone snail), this protein is Con-Ins F2.